Here is a 527-residue protein sequence, read N- to C-terminus: Tyrosine-protein kinase TXK (527 aa).

A disordered region spans residues 58-81 (TQSNRGGVQPSKRKPLPPLPQEPP). The SH3 domain occupies 82–142 (DERIQVKALY…PSNYVTENRL (61 aa)). Tyrosine 91 is modified (phosphotyrosine; by autocatalysis). The 97-residue stretch at 150–246 (WYHKNITRNQ…GLISRLRYPI (97 aa)) folds into the SH2 domain. One can recognise a Protein kinase domain in the interval 271–527 (LAFVKEIGSG…QVLTEIAETW (257 aa)). ATP is bound by residues 277 to 285 (IGSGQFGVV) and lysine 299. Aspartate 390 acts as the Proton acceptor in catalysis. Tyrosine 420 carries the phosphotyrosine; by FYN and autocatalysis modification.

It belongs to the protein kinase superfamily. Tyr protein kinase family. TEC subfamily. Interacts with PARP1 and EEF1A1. Interacts with SH2D2A. Interacts with FYN. Post-translationally, phosphorylated at Tyr-420 by FYN. Autophosphorylation at Tyr-91 is critical for the activation of TXK, leading to the up-regulation of IFN-gamma gene transcription. The cysteine string at the N-terminus is palmitoylated and required for the proper subcellular location. In terms of tissue distribution, expressed in early thymocytes, T-cells and mast cells.

It localises to the cytoplasm. The protein resides in the nucleus. It is found in the cell membrane. It carries out the reaction L-tyrosyl-[protein] + ATP = O-phospho-L-tyrosyl-[protein] + ADP + H(+). Its activity is regulated as follows. Activated by phosphorylation by FYN. Non-receptor tyrosine kinase that plays a redundant role with ITK in regulation of the adaptive immune response. Regulates the development, function and differentiation of conventional T-cells and nonconventional NKT-cells. When antigen presenting cells (APC) activate T-cell receptor (TCR), a series of phosphorylation leads to the recruitment of TXK to the cell membrane, where it is phosphorylated at Tyr-420. Phosphorylation leads to TXK full activation. Also contributes to signaling from many receptors and participates in multiple downstream pathways, including regulation of the actin cytoskeleton. Like ITK, can phosphorylate PLCG1, leading to its localization in lipid rafts and activation, followed by subsequent cleavage of its substrates. In turn, the endoplasmic reticulum releases calcium in the cytoplasm and the nuclear activator of activated T-cells (NFAT) translocates into the nucleus to perform its transcriptional duty. Plays a role in the positive regulation of IFNG transcription in T-helper 1 cells as part of an IFNG promoter-binding complex with PARP1 and EEF1A1. Within the complex, phosphorylates both PARP1 and EEF1A1. Also phosphorylates key sites in LCP2 leading to the up-regulation of Th1 preferred cytokine IL-2. Phosphorylates 'Tyr-201' of CTLA4 which leads to the association of PI-3 kinase with the CTLA4 receptor. The polypeptide is Tyrosine-protein kinase TXK (Txk) (Mus musculus (Mouse)).